The sequence spans 441 residues: 5-hydroxytryptamine receptor 3B (441 aa).

The N-terminal stretch at 1–21 is a signal peptide; that stretch reads MLSSVMAPLWACILVAAGILA. Residues 22–238 are Extracellular-facing; sequence TDTHHPQDSA…IQFNVVMRRH (217 aa). 5 N-linked (GlcNAc...) asparagine glycosylation sites follow: Asn-52, Asn-96, Asn-138, Asn-168, and Asn-203. Cys-155 and Cys-169 are oxidised to a cystine. A helical membrane pass occupies residues 239–259; it reads PLVYVVSLLIPSIFLMLVDLG. Topologically, residues 260-268 are cytoplasmic; sequence SFYLPPNCR. A helical membrane pass occupies residues 269 to 286; the sequence is ARIVFKTSVLVGYTVFRV. Residue Asn-287 is glycosylated (N-linked (GlcNAc...) asparagine). Residues 287 to 303 lie on the Extracellular side of the membrane; it reads NMSNQVPRSVGSTPLIG. A helical transmembrane segment spans residues 304-324; sequence HFFTICMAFLVLSLAKSIVLV. At 325 to 414 the chain is on the cytoplasmic side; that stretch reads KFLHDEQRGG…WLVLLSRFDR (90 aa). The HA-stretch; determines single-channel conductance in 5-HT3 receptors stretch occupies residues 381–413; that stretch reads VWSQLQSISNYLQTQDQTDQQEAEWLVLLSRFD. The chain crosses the membrane as a helical span at residues 415-435; sequence LLFQSYLFMLGIYTITLCSLW. Over 436–441 the chain is Extracellular; sequence ALWGGV.

The protein belongs to the ligand-gated ion channel (TC 1.A.9) family. 5-hydroxytryptamine receptor (TC 1.A.9.2) subfamily. HTR3B sub-subfamily. In terms of assembly, forms homopentameric as well as heteropentameric serotonin-activated cation-selective channel complexes with HTR3A. The homomeric complex is not functional. Heteropentameric complexes display properties which resemble that of neuronal serotonin-activated channels in vivo. N-glycosylation required for membrane localization. In terms of tissue distribution, expressed in the brain cortex, in the caudate nucleus, the hippocampus, the thalamus and the amygdala. Detected in the kidney and testis as well as in monocytes of the spleen, small and large intestine, uterus, prostate, ovary and placenta.

Its subcellular location is the postsynaptic cell membrane. The protein resides in the cell membrane. It carries out the reaction Na(+)(in) = Na(+)(out). It catalyses the reaction K(+)(in) = K(+)(out). The catalysed reaction is Ca(2+)(in) = Ca(2+)(out). Functionally, forms serotonin (5-hydroxytryptamine/5-HT3)-activated cation-selective channel complexes, which when activated cause fast, depolarizing responses in neurons. The sequence is that of 5-hydroxytryptamine receptor 3B from Homo sapiens (Human).